Consider the following 329-residue polypeptide: rRNA 2'-O-methyltransferase fibrillarin (329 aa).

Residues 1-85 (MAFGAPRGRG…GGARGGARGG (85 aa)) are disordered. A compositionally biased stretch (gly residues) spans 13–84 (RGGFGGRGGS…RGGARGGARG (72 aa)). Residues 181 to 182 (TS), 200 to 201 (EF), 225 to 226 (DA), and 245 to 248 (DVAQ) contribute to the S-adenosyl-L-methionine site.

The protein belongs to the methyltransferase superfamily. Fibrillarin family. In terms of assembly, component of box C/D small nucleolar ribonucleoprotein (snoRNP) particles that contain SNU13, NOP1, SIK1/NOP56 and NOP58, plus a guide RNA. Post-translationally, by homology to other fibrillarins, some or all of the N-terminal domain arginines are modified to asymmetric dimethylarginine (DMA).

It localises to the nucleus. It is found in the nucleolus. The catalysed reaction is L-glutaminyl-[histone H2A] + S-adenosyl-L-methionine = N(5)-methyl-L-glutaminyl-[histone H2A] + S-adenosyl-L-homocysteine + H(+). In terms of biological role, S-adenosyl-L-methionine-dependent methyltransferase that has the ability to methylate both RNAs and proteins. Involved in pre-rRNA processing. Utilizes the methyl donor S-adenosyl-L-methionine to catalyze the site-specific 2'-hydroxyl methylation of ribose moieties in pre-ribosomal RNA. Site specificity is provided by a guide RNA that base pairs with the substrate. Methylation occurs at a characteristic distance from the sequence involved in base pairing with the guide RNA. Also acts as a protein methyltransferase by mediating methylation of 'Gln-105' of histone H2A (H2AQ105me), a modification that impairs binding of the FACT complex and is specifically present at 35S ribosomal DNA locus. This Debaryomyces hansenii (strain ATCC 36239 / CBS 767 / BCRC 21394 / JCM 1990 / NBRC 0083 / IGC 2968) (Yeast) protein is rRNA 2'-O-methyltransferase fibrillarin (NOP1).